Here is a 592-residue protein sequence, read N- to C-terminus: MTVEQKFGLFSAEIKEADPLAASEASQPKPCPPEVTPHYIWIDFLVQRFEIAKYCSSDQVEIFSSLLQRSMSLNIGRAKGSMNRHVAAIGPRFKLLTLGLSLLHADVVPNATIRNVLREKIYSTAFDYFSCPPKFPTQGEKRLREDISIMIKFWTAMFSDKKYLTASQLVPPADIGDLLEQLVEENTGSLSGPAKDFYQRGFDFFNKITNVSAVIKPYPKGDERKKACLSALSEVTVQPGCSLPSNPEAIVLDVDYKSGTPMQSAAKAPYLAKFKVKRCGVSELEKEGLRCRSDSEDECSTQEADGQKISWQAAIFKLGDDCRQKSYWGARMPTDRILRLPASQDMLALQIIDLFKNIFQLVGLDLFVFPYRVVATAPGCGVIECIPDCTSRDQLGRQTDFGMYDYFTRQYGDESTLAFQQARYNFIRSMAAYSLLLFLLQIKDRHNGNIMLDKKGHIIHIDFGFMFESSPGGNLGWEPDIKLTDEMVMIMGGKMEATPFKWFMEMCVQATWLCGEPGPYMDVVVSLVTIMLDTGLPCFRGQTIKLLKHRFSPNMTEREAANFIMKVIQSCFLSNRSRTYNMIQYYQNDIPY.

Residues 180-318 form a pleckstrin homology (PH) domain conferring phosphoinositide binding specificity region; that stretch reads EQLVEENTGS…ISWQAAIFKL (139 aa). The PI3K/PI4K catalytic domain maps to 275–576; that stretch reads KVKRCGVSEL…VIQSCFLSNR (302 aa). A G-loop region spans residues 281–287; sequence VSELEKE. The segment at 441–449 is catalytic loop; it reads QIKDRHNGN. The segment at 460 to 484 is activation loop; that stretch reads HIDFGFMFESSPGGNLGWEPDIKLT.

It belongs to the PI3/PI4-kinase family. Type III PI4K subfamily.

The sequence is that of Putative phosphatidylinositol 4-kinase alpha-like protein P2 (PI4KAP2) from Homo sapiens (Human).